We begin with the raw amino-acid sequence, 417 residues long: Carbohydrate sulfotransferase 8 (417 aa).

Residues 1-10 (MTPRLGTMRL) lie on the Cytoplasmic side of the membrane. A helical; Signal-anchor for type II membrane protein membrane pass occupies residues 11–31 (ACMFSSILLFGAAGLLLFISL). Over 32-417 (QDPIELSPQQ…NYSKPFSDLY (386 aa)) the chain is Lumenal. The segment at 47-101 (FSIRPQQPQHDSHLRISTEKGTRDSPSGSPRGLQLQAPDQPRPHPKAAGSPLRLR) is disordered. A compositionally biased stretch (basic and acidic residues) spans 56 to 69 (HDSHLRISTEKGTR). Residues Asn121 and Asn122 are each glycosylated (N-linked (GlcNAc...) asparagine). 3'-phosphoadenylyl sulfate is bound by residues 191-197 (PKAGCSN) and 251-259 (REPFERLVS). N-linked (GlcNAc...) asparagine glycans are attached at residues Asn287, Asn360, and Asn408.

Belongs to the sulfotransferase 2 family. In terms of tissue distribution, strongly expressed in brain. Weakly expressed in lung and kidney. Weakly expressed in pituitary.

The protein localises to the golgi apparatus membrane. Catalyzes the transfer of sulfate to position 4 of non-reducing N-acetylgalactosamine (GalNAc) residues in both N-glycans and O-glycans. Required for biosynthesis of glycoprotein hormones lutropin and thyrotropin, by mediating sulfation of their carbohydrate structures. Only active against terminal GalNAcbeta1,GalNAcbeta. Not active toward chondroitin. In Mus musculus (Mouse), this protein is Carbohydrate sulfotransferase 8 (Chst8).